The following is a 154-amino-acid chain: Ribosomal RNA large subunit methyltransferase H (154 aa).

Gly-102 contacts S-adenosyl-L-methionine.

It belongs to the RNA methyltransferase RlmH family. Homodimer.

The protein resides in the cytoplasm. The catalysed reaction is pseudouridine(1915) in 23S rRNA + S-adenosyl-L-methionine = N(3)-methylpseudouridine(1915) in 23S rRNA + S-adenosyl-L-homocysteine + H(+). In terms of biological role, specifically methylates the pseudouridine at position 1915 (m3Psi1915) in 23S rRNA. The polypeptide is Ribosomal RNA large subunit methyltransferase H (Caulobacter sp. (strain K31)).